Reading from the N-terminus, the 193-residue chain is Zinc finger protein 740 (193 aa).

Positions 33-75 are disordered; that stretch reads SKQAENGERAGSPDVLRCSSQGHRKDSDKSRSRKDDDSLSEAS. Lys-34 participates in a covalent cross-link: Glycyl lysine isopeptide (Lys-Gly) (interchain with G-Cter in SUMO2). Ser-44 carries the phosphoserine modification. Residues 55–69 show a composition bias toward basic and acidic residues; the sequence is HRKDSDKSRSRKDDD. C2H2-type zinc fingers lie at residues 101 to 123 and 129 to 151; these read FVCEHCFGAFRSSYHLKRHILIH and FECDICDMRFIQKYHLERHKRVH. A C2H2-type 3; atypical zinc finger spans residues 157 to 179; that stretch reads YQCERCHQCFSRTDRLLRHKRMC.

This sequence belongs to the krueppel C2H2-type zinc-finger protein family.

Its subcellular location is the nucleus. May be involved in transcriptional regulation. The sequence is that of Zinc finger protein 740 (ZNF740) from Homo sapiens (Human).